We begin with the raw amino-acid sequence, 262 residues long: Phosphoribosylformylglycinamidine synthase subunit PurQ (262 aa).

Residues 2 to 238 (RIAVIQFPGT…FAWQLPRKHP (237 aa)) form the Glutamine amidotransferase type-1 domain. The active-site Nucleophile is the cysteine 87. Residues histidine 223 and glutamate 225 contribute to the active site.

Part of the FGAM synthase complex composed of 1 PurL, 1 PurQ and 2 PurS subunits.

The protein resides in the cytoplasm. The catalysed reaction is N(2)-formyl-N(1)-(5-phospho-beta-D-ribosyl)glycinamide + L-glutamine + ATP + H2O = 2-formamido-N(1)-(5-O-phospho-beta-D-ribosyl)acetamidine + L-glutamate + ADP + phosphate + H(+). It carries out the reaction L-glutamine + H2O = L-glutamate + NH4(+). Its pathway is purine metabolism; IMP biosynthesis via de novo pathway; 5-amino-1-(5-phospho-D-ribosyl)imidazole from N(2)-formyl-N(1)-(5-phospho-D-ribosyl)glycinamide: step 1/2. In terms of biological role, part of the phosphoribosylformylglycinamidine synthase complex involved in the purines biosynthetic pathway. Catalyzes the ATP-dependent conversion of formylglycinamide ribonucleotide (FGAR) and glutamine to yield formylglycinamidine ribonucleotide (FGAM) and glutamate. The FGAM synthase complex is composed of three subunits. PurQ produces an ammonia molecule by converting glutamine to glutamate. PurL transfers the ammonia molecule to FGAR to form FGAM in an ATP-dependent manner. PurS interacts with PurQ and PurL and is thought to assist in the transfer of the ammonia molecule from PurQ to PurL. The protein is Phosphoribosylformylglycinamidine synthase subunit PurQ of Methanothrix thermoacetophila (strain DSM 6194 / JCM 14653 / NBRC 101360 / PT) (Methanosaeta thermophila).